We begin with the raw amino-acid sequence, 155 residues long: Putative pre-16S rRNA nuclease (155 aa).

The protein belongs to the YqgF nuclease family.

Its subcellular location is the cytoplasm. Could be a nuclease involved in processing of the 5'-end of pre-16S rRNA. In Wolbachia pipientis wMel, this protein is Putative pre-16S rRNA nuclease.